The primary structure comprises 231 residues: NADH-ubiquinone oxidoreductase chain 4 (231 aa).

6 consecutive transmembrane segments (helical) span residues 1-21 (PIAG…YGII), 34-54 (LFLP…LTCL), 63-85 (IAYS…TPWG), 89-111 (AMAL…NTTY), 128-148 (ILPM…AIPP), and 156-176 (LLIM…LGLS).

The protein belongs to the complex I subunit 4 family.

The protein localises to the mitochondrion membrane. The catalysed reaction is a ubiquinone + NADH + 5 H(+)(in) = a ubiquinol + NAD(+) + 4 H(+)(out). Its function is as follows. Core subunit of the mitochondrial membrane respiratory chain NADH dehydrogenase (Complex I) that is believed to belong to the minimal assembly required for catalysis. Complex I functions in the transfer of electrons from NADH to the respiratory chain. The immediate electron acceptor for the enzyme is believed to be ubiquinone. This Crotalus concolor (Midget faded rattlesnake) protein is NADH-ubiquinone oxidoreductase chain 4 (MT-ND4).